We begin with the raw amino-acid sequence, 162 residues long: Phenazine biosynthesis protein PhzB 2 (162 aa).

The residue at position 91 (threonine 91) is a Phosphothreonine.

Belongs to the PhzA/PhzB family.

In terms of biological role, involved in the biosynthesis of the antibiotic phenazine, a nitrogen-containing heterocyclic molecule having important roles in virulence, competition and biological control. The polypeptide is Phenazine biosynthesis protein PhzB 2 (phzB2) (Pseudomonas aeruginosa (strain UCBPP-PA14)).